We begin with the raw amino-acid sequence, 526 residues long: NAD(P)H-quinone oxidoreductase chain 4 (526 aa).

The next 13 membrane-spanning stretches (helical) occupy residues 5–25 (FPWL…VPLI), 32–52 (WYSF…FFTS), 87–107 (LILL…PVTL), 111–131 (MFHF…AVQD), 133–153 (VLFF…LAIW), 165–185 (FILY…AMYF), 211–231 (FLGL…HTWL), 239–259 (TAPV…YALI), 273–293 (FAPL…LTSF), 302–320 (IAYS…VGSL), 331–351 (QMIS…ATYD), 371–393 (IFAM…GFVA), and 414–434 (LVVL…LSML).

This sequence belongs to the complex I subunit 4 family.

Its subcellular location is the cell inner membrane. It catalyses the reaction a plastoquinone + NADH + (n+1) H(+)(in) = a plastoquinol + NAD(+) + n H(+)(out). The catalysed reaction is a plastoquinone + NADPH + (n+1) H(+)(in) = a plastoquinol + NADP(+) + n H(+)(out). In terms of biological role, NDH-1 shuttles electrons from NAD(P)H, via FMN and iron-sulfur (Fe-S) centers, to quinones in the respiratory chain. The immediate electron acceptor for the enzyme in this species is believed to be plastoquinone. Couples the redox reaction to proton translocation (for every two electrons transferred, four hydrogen ions are translocated across the cytoplasmic membrane), and thus conserves the redox energy in a proton gradient. This Gloeobacter violaceus (strain ATCC 29082 / PCC 7421) protein is NAD(P)H-quinone oxidoreductase chain 4.